Here is a 133-residue protein sequence, read N- to C-terminus: Salivary cystatin-L (133 aa).

Residues 1-19 (MTASFALVLLLGGVAVCIA) form the signal peptide. The Cystatin domain maps to 29–115 (KANHQANPEY…VAQRTCTTVV (87 aa)).

It belongs to the cystatin family. As to expression, salivary gland.

Its subcellular location is the secreted. In terms of biological role, inhibitor of cysteine proteinases. Inhibits host cathepsin L (CTSL) and S (CTSS). Modulates production of various cytokines and chemokines in lipopolysaccharide (LPS)-stimulated mouse dendritic cell. Suppresses maturation of mouse bone-marrow-derived dendritic cells (BMDCs). In Ixodes persulcatus (Taiga tick), this protein is Salivary cystatin-L.